A 112-amino-acid polypeptide reads, in one-letter code: Nitrogen regulatory protein GlnK2 (112 aa).

ADP is bound by residues Thr-29, 37–39, Val-64, and 87–90; these read GVQ and GDGK. Residues Thr-29, 37-39, Val-64, and 87-90 each bind ATP; these read GVQ and GDGK.

Belongs to the P(II) protein family. Homotrimer. Interacts and forms a complex with Amt2.

It is found in the cytoplasm. In terms of biological role, involved in the regulation of nitrogen metabolism. Regulates the activity of its targets by protein-protein interaction in response to the nitrogen status of the cell. Regulates the activity of the ammonia channel Amt2 via direct interaction. This chain is Nitrogen regulatory protein GlnK2, found in Methanocaldococcus jannaschii (strain ATCC 43067 / DSM 2661 / JAL-1 / JCM 10045 / NBRC 100440) (Methanococcus jannaschii).